A 137-amino-acid chain; its full sequence is TSC22 domain family protein 3 (137 aa).

The segment at 1–60 (MNTEMYQTPMEVAVYQLHNFSISFFSSLLGGDVVSVKLDNSASGASVVALDNKIEQAMDL) is AP1-binding. Residues Asn-40 and Val-73 each carry the phosphoserine modification. The interval 76-97 (LKEQIRELLEKNSQLERENTLL) is leucine-zipper. The interval 101–137 (ASPEQLEKFQSRLSPEEPAPEAPETPETPEAPGGSAV) is disordered. Phosphoserine is present on Ser-102. Residues Thr-125 and Thr-128 each carry the phosphothreonine modification. Low complexity predominate over residues 128 to 137 (TPEAPGGSAV).

It belongs to the TSC-22/Dip/Bun family. As to quaternary structure, can form homodimers, however it is likely to function as a monomer. Interacts with NFKB1. Interacts (via N-terminus) with JUN and FOS; these interactions inhibit the binding of active AP1 to its target DNA. Interacts with MYOD1. Interacts with HDAC1; this interaction affects HDAC1 activity on MYOG promoter and thus inhibits MYOD1 transcriptional activity. In terms of assembly, interacts with MYOD1. In terms of tissue distribution, expressed in T-cells. Expression inversely correlates with T-cell activation, being higher in resting cells and lower in cells activated by TCR/CD3 triggering (at protein level). Constitutively expressed in lung, intestine, kidney and liver, most probably by resident cells from the macrophage lineage. Expressed in thymus, lymph nodes, bone marrow, spleen, lung and skeletal muscle. As to expression, expressed in spleen and skeletal muscle (at protein level). Expressed in the cortex, medulla and papilla of the kidney. Expressed in the cortex, medulla and papilla of the kidney. In terms of tissue distribution, expressed in spleen and skeletal muscle (at protein level).

The protein localises to the cytoplasm. It is found in the nucleus. In terms of biological role, protects T-cells from IL2 deprivation-induced apoptosis through the inhibition of FOXO3A transcriptional activity that leads to the down-regulation of the pro-apoptotic factor BCL2L11. In macrophages, plays a role in the anti-inflammatory and immunosuppressive effects of glucocorticoids and IL10. In T-cells, inhibits anti-CD3-induced NFKB1 nuclear translocation and thereby NFKB1 DNA-binding activities. In vitro, suppresses AP-1 transcription factor complex DNA-binding activities. Inhibits myogenic differentiation and mediates anti-myogenic effects of glucocorticoids by binding and regulating MYOD1 and HDAC1 transcriptional activity resulting in reduced expression of MYOG. The polypeptide is TSC22 domain family protein 3 (Mus musculus (Mouse)).